The sequence spans 492 residues: Protein nucleotidyltransferase YdiU (492 aa).

Positions 88, 90, 91, 111, 123, 124, 174, and 181 each coordinate ATP. The active-site Proton acceptor is the Asp250. Mg(2+) is bound by residues Asn251 and Asp260. Residue Asp260 coordinates ATP.

This sequence belongs to the SELO family. Requires Mg(2+) as cofactor. Mn(2+) serves as cofactor.

It catalyses the reaction L-seryl-[protein] + ATP = 3-O-(5'-adenylyl)-L-seryl-[protein] + diphosphate. The catalysed reaction is L-threonyl-[protein] + ATP = 3-O-(5'-adenylyl)-L-threonyl-[protein] + diphosphate. The enzyme catalyses L-tyrosyl-[protein] + ATP = O-(5'-adenylyl)-L-tyrosyl-[protein] + diphosphate. It carries out the reaction L-histidyl-[protein] + UTP = N(tele)-(5'-uridylyl)-L-histidyl-[protein] + diphosphate. It catalyses the reaction L-seryl-[protein] + UTP = O-(5'-uridylyl)-L-seryl-[protein] + diphosphate. The catalysed reaction is L-tyrosyl-[protein] + UTP = O-(5'-uridylyl)-L-tyrosyl-[protein] + diphosphate. In terms of biological role, nucleotidyltransferase involved in the post-translational modification of proteins. It can catalyze the addition of adenosine monophosphate (AMP) or uridine monophosphate (UMP) to a protein, resulting in modifications known as AMPylation and UMPylation. The polypeptide is Protein nucleotidyltransferase YdiU (Rhodopseudomonas palustris (strain ATCC BAA-98 / CGA009)).